The following is a 792-amino-acid chain: uncharacterized protein (792 aa).

361-362 provides a ligand contact to substrate; the sequence is WD. The active-site Proton donor is the E488. Residue 590-591 participates in substrate binding; the sequence is KQ. The interval 753-792 is disordered; the sequence is DSPSTIAVRDRKPLLPPPSQPPGREPVSRRHKSLIISAAR. Pro residues predominate over residues 766-776; it reads LLPPPSQPPGR.

This sequence belongs to the glycosyl hydrolase 65 family.

This is an uncharacterized protein from Mycobacterium leprae (strain TN).